The following is a 517-amino-acid chain: Type II methyltransferase M.CeqI (517 aa).

2 disordered regions span residues 1–21 (MVVT…RWPR) and 33–62 (GRPR…HGRS). Over residues 51-62 (RPRRGRAPHGRS) the composition is skewed to basic residues. 3 TPR repeats span residues 283–316 (AEFY…FENN), 361–394 (ALLL…GDHS), and 476–509 (SELA…RTNM).

It catalyses the reaction a 2'-deoxyadenosine in DNA + S-adenosyl-L-methionine = an N(6)-methyl-2'-deoxyadenosine in DNA + S-adenosyl-L-homocysteine + H(+). Its function is as follows. A methylase, recognizes the double-stranded sequence 5'-GATATC-3', methylates A-? on both strands, and protects the DNA from cleavage by the CeqI endonuclease. The polypeptide is Type II methyltransferase M.CeqI (ceqIM) (Rhodococcus hoagii (Corynebacterium equii)).